A 476-amino-acid chain; its full sequence is NADH-quinone oxidoreductase subunit N (476 aa).

14 helical membrane passes run 4 to 24, 32 to 52, 67 to 87, 100 to 117, 121 to 141, 155 to 175, 198 to 218, 230 to 250, 263 to 283, 291 to 311, 319 to 339, 366 to 386, 406 to 426, and 447 to 467; these read LLAL…MLTI, LTAT…VVAW, GLAV…ATLG, EYYL…ALVS, LAAL…MLAY, YMVL…LLYS, LMAG…IVPF, PAPA…LVLL, LHSL…LLAL, LLGY…VVND, ALYL…VTLL, AVLT…GFIG, VVAG…TLFL, and VVVL…APMI.

It belongs to the complex I subunit 2 family. As to quaternary structure, NDH-1 is composed of 14 different subunits. Subunits NuoA, H, J, K, L, M, N constitute the membrane sector of the complex.

Its subcellular location is the cell inner membrane. The catalysed reaction is a quinone + NADH + 5 H(+)(in) = a quinol + NAD(+) + 4 H(+)(out). Functionally, NDH-1 shuttles electrons from NADH, via FMN and iron-sulfur (Fe-S) centers, to quinones in the respiratory chain. The immediate electron acceptor for the enzyme in this species is believed to be ubiquinone. Couples the redox reaction to proton translocation (for every two electrons transferred, four hydrogen ions are translocated across the cytoplasmic membrane), and thus conserves the redox energy in a proton gradient. The chain is NADH-quinone oxidoreductase subunit N from Chromohalobacter salexigens (strain ATCC BAA-138 / DSM 3043 / CIP 106854 / NCIMB 13768 / 1H11).